Here is a 158-residue protein sequence, read N- to C-terminus: NADH-quinone oxidoreductase subunit B 2 (158 aa).

[4Fe-4S] cluster contacts are provided by C37, C38, C102, and C132.

Belongs to the complex I 20 kDa subunit family. In terms of assembly, NDH-1 is composed of 14 different subunits. Subunits NuoB, C, D, E, F, and G constitute the peripheral sector of the complex. Requires [4Fe-4S] cluster as cofactor.

The protein resides in the cell inner membrane. It catalyses the reaction a quinone + NADH + 5 H(+)(in) = a quinol + NAD(+) + 4 H(+)(out). NDH-1 shuttles electrons from NADH, via FMN and iron-sulfur (Fe-S) centers, to quinones in the respiratory chain. Couples the redox reaction to proton translocation (for every two electrons transferred, four hydrogen ions are translocated across the cytoplasmic membrane), and thus conserves the redox energy in a proton gradient. In Acidithiobacillus ferrooxidans (strain ATCC 53993 / BNL-5-31) (Leptospirillum ferrooxidans (ATCC 53993)), this protein is NADH-quinone oxidoreductase subunit B 2.